The following is a 724-amino-acid chain: uncharacterized protein (724 aa).

Disordered stretches follow at residues 97–131, 187–252, 309–434, and 454–473; these read RKSF…YPSP, ETKI…FETE, FETE…TSKL, and RGVE…VAEK. Positions 115–128 are enriched in polar residues; it reads TRSASYSESNNSFY. The stretch at 187-217 forms a coiled coil; sequence ETKIGIEEENEESEILAEEKEEEDNDFSVLE. Over residues 193–212 the composition is skewed to acidic residues; the sequence is EEENEESEILAEEKEEEDND. Basic and acidic residues-rich tracts occupy residues 223–252 and 309–322; these read QEIK…FETE and FETE…DHSE. 2 stretches are compositionally biased toward low complexity: residues 323-333 and 347-366; these read TTTSETDSTES and SPQT…SLRS. A compositionally biased stretch (pro residues) spans 367–388; that stretch reads QPPPPPPSPEHKAPAPPPPPPM. A compositionally biased stretch (polar residues) spans 400–410; it reads FSKTHSTNGDN. Coiled coils occupy residues 495 to 522 and 649 to 678; these read SYFQ…HSFQ and MELA…RAKR.

This is an uncharacterized protein from Arabidopsis thaliana (Mouse-ear cress).